Consider the following 87-residue polypeptide: Putative regulatory protein GTNG_1019 (87 aa).

Belongs to the RemA family.

This chain is Putative regulatory protein GTNG_1019, found in Geobacillus thermodenitrificans (strain NG80-2).